The sequence spans 416 residues: 46 kDa surface antigen (416 aa).

The signal sequence occupies residues 1 to 27; the sequence is MLRKKFLYSSAIYATSLASIIAFVAAG. C28 carries the N-palmitoyl cysteine lipid modification. C28 carries S-diacylglycerol cysteine lipidation.

It is found in the cell membrane. The chain is 46 kDa surface antigen (p46) from Mesomycoplasma hyopneumoniae (strain 232) (Mycoplasma hyopneumoniae).